Consider the following 429-residue polypeptide: Ribosomal RNA small subunit methyltransferase B (429 aa).

S-adenosyl-L-methionine-binding positions include 254 to 260, Asp277, Asp303, and Asp322; that span reads CAAPGGK. The active-site Nucleophile is Cys375.

This sequence belongs to the class I-like SAM-binding methyltransferase superfamily. RsmB/NOP family.

It localises to the cytoplasm. It catalyses the reaction cytidine(967) in 16S rRNA + S-adenosyl-L-methionine = 5-methylcytidine(967) in 16S rRNA + S-adenosyl-L-homocysteine + H(+). Its function is as follows. Specifically methylates the cytosine at position 967 (m5C967) of 16S rRNA. The polypeptide is Ribosomal RNA small subunit methyltransferase B (Yersinia pestis bv. Antiqua (strain Angola)).